Reading from the N-terminus, the 643-residue chain is Threonine--tRNA ligase (643 aa).

Residues 1 to 61 enclose the TGS domain; the sequence is MPIITLPDGS…EQDATLEIIT (61 aa). Residues 243–534 form a catalytic region; the sequence is DHRKIGKALD…ITEEYAGFFP (292 aa). Zn(2+) contacts are provided by C334, H385, and H511.

It belongs to the class-II aminoacyl-tRNA synthetase family. As to quaternary structure, homodimer. Zn(2+) is required as a cofactor.

It localises to the cytoplasm. The enzyme catalyses tRNA(Thr) + L-threonine + ATP = L-threonyl-tRNA(Thr) + AMP + diphosphate + H(+). Its function is as follows. Catalyzes the attachment of threonine to tRNA(Thr) in a two-step reaction: L-threonine is first activated by ATP to form Thr-AMP and then transferred to the acceptor end of tRNA(Thr). Also edits incorrectly charged L-seryl-tRNA(Thr). The sequence is that of Threonine--tRNA ligase from Haemophilus influenzae (strain ATCC 51907 / DSM 11121 / KW20 / Rd).